The chain runs to 329 residues: Cathepsin K (329 aa).

The signal sequence occupies residues 1 to 15 (MWVFKFLLLPVVSFA). A propeptide spans 16–114 (LSPEETLDTQ…TLYTPEWEGR (99 aa)) (activation peptide). N103 carries N-linked (GlcNAc...) asparagine glycosylation. 2 disulfides stabilise this stretch: C136-C177 and C170-C210. Residue C139 is part of the active site. An N-linked (GlcNAc...) asparagine glycan is attached at N213. C269 and C318 are joined by a disulfide. Residues H276 and N296 contribute to the active site.

This sequence belongs to the peptidase C1 family.

It localises to the lysosome. The protein localises to the secreted. The protein resides in the apical cell membrane. The catalysed reaction is Broad proteolytic activity. With small-molecule substrates and inhibitors, the major determinant of specificity is P2, which is preferably Leu, Met &gt; Phe, and not Arg.. Functionally, thiol protease involved in osteoclastic bone resorption and may participate partially in the disorder of bone remodeling. Displays potent endoprotease activity against fibrinogen at acid pH. May play an important role in extracellular matrix degradation. Involved in the release of thyroid hormone thyroxine (T4) by limited proteolysis of TG/thyroglobulin in the thyroid follicle lumen. This is Cathepsin K (Ctsk) from Rattus norvegicus (Rat).